A 673-amino-acid polypeptide reads, in one-letter code: Xyloglucan glycosyltransferase 4 (673 aa).

A run of 2 helical transmembrane segments spans residues 90 to 110 (FIKA…VAHF) and 144 to 164 (IAPL…IQSL). The active site involves Asp-238. Substrate-binding residues include Asp-297 and Asp-299. Asp-391 is an active-site residue. Helical transmembrane passes span 469-489 (LILP…TMFI) and 494-514 (LPLW…ILPS). Ser-581 bears the Phosphoserine mark. The next 2 membrane-spanning stretches (helical) occupy residues 623–643 (VFKK…RSFL) and 648–668 (LHFY…LDLI).

The protein belongs to the glycosyltransferase 2 family. Plant cellulose synthase-like C subfamily. As to quaternary structure, homodimer. Interacts with XXT5. Interacts with FUT1, MUR3 and XLT2. Expressed in seedlings, roots, leaves, stems, flowers and seeds.

The protein resides in the golgi apparatus membrane. Beta-1,4-glucan synthase rather involved in the synthesis of the xyloglucan backbone than cellulose. Seems to work simultaneously with xyloglucan 6-xylosyltransferase. Xyloglucan is a noncellulosic polysaccharides of plant cell wall and consists of a glucan backbone substituted by xylose, galactose and fucose. Associates with other xyloglucan-synthesizing enzymes to form multiprotein complexes for xyloglucan synthesis in the Golgi. The protein is Xyloglucan glycosyltransferase 4 of Arabidopsis thaliana (Mouse-ear cress).